Reading from the N-terminus, the 260-residue chain is MKYVVKLGGAALENPEIFMACARAVADLVKDGHQVALVHGGGVQLTRTLKQLGKQSEFIAGLRVTDAETRDAALMVLSGRVNKSLVAALGSLGQAAMGLSGGDGLIFRARKKRTVPDLGFVGEIVASDPRWLEAIWKMNAVPVISSIALGFDGEYYNVNADEMAAACAAACRADALVFLTDVPGVRGADGTIMRWLTVDQIPVLSQTEVISGGMLPKLGACREALLNGVKRVRILPAEAAHVLPDLCSARVTDGTEVMAS.

Substrate-binding positions include 41-42 (GG), Arg-63, and Asn-157.

Belongs to the acetylglutamate kinase family. ArgB subfamily.

The protein resides in the cytoplasm. It catalyses the reaction N-acetyl-L-glutamate + ATP = N-acetyl-L-glutamyl 5-phosphate + ADP. It participates in amino-acid biosynthesis; L-arginine biosynthesis; N(2)-acetyl-L-ornithine from L-glutamate: step 2/4. Catalyzes the ATP-dependent phosphorylation of N-acetyl-L-glutamate. This chain is Acetylglutamate kinase, found in Acidobacterium capsulatum (strain ATCC 51196 / DSM 11244 / BCRC 80197 / JCM 7670 / NBRC 15755 / NCIMB 13165 / 161).